The sequence spans 505 residues: Maturase K (505 aa).

It belongs to the intron maturase 2 family. MatK subfamily.

It is found in the plastid. The protein resides in the chloroplast. Its function is as follows. Usually encoded in the trnK tRNA gene intron. Probably assists in splicing its own and other chloroplast group II introns. The protein is Maturase K of Barclaya longifolia (Orchid lily).